Consider the following 403-residue polypeptide: Golgin-45 (403 aa).

The interval methionine 1–proline 63 is disordered. A Tankyrase-binding motif motif is present at residues arginine 22 to aspartate 26. The residue at position 53 (serine 53) is a Phosphoserine. A coiled-coil region spans residues arginine 123–aspartate 216. Position 356 is a phosphoserine (serine 356). The segment at glutamine 397–leucine 403 is essential for interaction with GORASP2.

In terms of assembly, interacts with GORASP2. Interacts with the GTP-bound form of RAB2, but not with other Golgi Rab proteins. Identified in a complex with RAB2 and GORASP2. ADP-ribosylated by tankyrase TNKS and TNKS2. Poly-ADP-ribosylated protein is recognized by RNF146, followed by ubiquitination. In terms of processing, ubiquitinated by RNF146 when poly-ADP-ribosylated, leading to its degradation.

It localises to the golgi apparatus membrane. Its function is as follows. Required for normal Golgi structure and for protein transport from the endoplasmic reticulum (ER) through the Golgi apparatus to the cell surface. This is Golgin-45 (Blzf1) from Mus musculus (Mouse).